Here is a 294-residue protein sequence, read N- to C-terminus: Transcriptional regulatory protein RXT3 (294 aa).

N-acetylserine is present on S2.

Belongs to the RXT3 family. As to quaternary structure, component of the RPD3C(L) complex composed of at least ASH1, CTI6, DEP1, PHO23, RPD3, RXT2, RXT3, SAP30, SDS3, SIN3, UME1 and UME6.

The protein localises to the nucleus. Functionally, component of the RPD3C(L) histone deacetylase complex (HDAC) responsible for the deacetylation of lysine residues on the N-terminal part of the core histones (H2A, H2B, H3 and H4). Histone deacetylation gives a tag for epigenetic repression and plays an important role in transcriptional regulation, cell cycle progression and developmental events. The sequence is that of Transcriptional regulatory protein RXT3 (RXT3) from Saccharomyces cerevisiae (strain ATCC 204508 / S288c) (Baker's yeast).